The chain runs to 409 residues: L-cysteine:1D-myo-inositol 2-amino-2-deoxy-alpha-D-glucopyranoside ligase (409 aa).

Cys43 provides a ligand contact to Zn(2+). L-cysteinyl-5'-AMP is bound by residues 43-46 (CGIT), Thr58, and 81-83 (NVT). Positions 45 to 55 (ITPYDATHMGH) match the 'HIGH' region motif. Residues 183-188 (ERGGDP) carry the 'ERGGDP' region motif. Trp224 is an L-cysteinyl-5'-AMP binding site. Cys228 contributes to the Zn(2+) binding site. Position 246–248 (246–248 (GSD)) interacts with L-cysteinyl-5'-AMP. His253 lines the Zn(2+) pocket. Val280 serves as a coordination point for L-cysteinyl-5'-AMP. Positions 286-290 (KMSKS) match the 'KMSKS' region motif.

The protein belongs to the class-I aminoacyl-tRNA synthetase family. MshC subfamily. In terms of assembly, monomer. Zn(2+) is required as a cofactor.

The enzyme catalyses 1D-myo-inositol 2-amino-2-deoxy-alpha-D-glucopyranoside + L-cysteine + ATP = 1D-myo-inositol 2-(L-cysteinylamino)-2-deoxy-alpha-D-glucopyranoside + AMP + diphosphate + H(+). Its function is as follows. Catalyzes the ATP-dependent condensation of GlcN-Ins and L-cysteine to form L-Cys-GlcN-Ins. The sequence is that of L-cysteine:1D-myo-inositol 2-amino-2-deoxy-alpha-D-glucopyranoside ligase from Streptomyces griseus subsp. griseus (strain JCM 4626 / CBS 651.72 / NBRC 13350 / KCC S-0626 / ISP 5235).